Reading from the N-terminus, the 310-residue chain is Glutaminase 1 (310 aa).

Substrate is bound by residues Ser66, Asn117, Glu161, Asn168, Tyr192, Tyr244, and Val262. At Lys294 the chain carries N6-acetyllysine.

This sequence belongs to the glutaminase family. Homotetramer.

It catalyses the reaction L-glutamine + H2O = L-glutamate + NH4(+). This Shigella flexneri protein is Glutaminase 1.